We begin with the raw amino-acid sequence, 273 residues long: Formamidopyrimidine-DNA glycosylase (273 aa).

P2 (schiff-base intermediate with DNA) is an active-site residue. Catalysis depends on E3, which acts as the Proton donor. K58 functions as the Proton donor; for beta-elimination activity in the catalytic mechanism. 3 residues coordinate DNA: H92, R111, and K153. The segment at 238–272 (KVYGREGQSCLSCSSTIIKIKHSGRSTFYCKTCQY) adopts an FPG-type zinc-finger fold. R262 functions as the Proton donor; for delta-elimination activity in the catalytic mechanism.

It belongs to the FPG family. Monomer. Requires Zn(2+) as cofactor.

The catalysed reaction is Hydrolysis of DNA containing ring-opened 7-methylguanine residues, releasing 2,6-diamino-4-hydroxy-5-(N-methyl)formamidopyrimidine.. It catalyses the reaction 2'-deoxyribonucleotide-(2'-deoxyribose 5'-phosphate)-2'-deoxyribonucleotide-DNA = a 3'-end 2'-deoxyribonucleotide-(2,3-dehydro-2,3-deoxyribose 5'-phosphate)-DNA + a 5'-end 5'-phospho-2'-deoxyribonucleoside-DNA + H(+). In terms of biological role, involved in base excision repair of DNA damaged by oxidation or by mutagenic agents. Acts as a DNA glycosylase that recognizes and removes damaged bases. Has a preference for oxidized purines, such as 7,8-dihydro-8-oxoguanine (8-oxoG). Has AP (apurinic/apyrimidinic) lyase activity and introduces nicks in the DNA strand. Cleaves the DNA backbone by beta-delta elimination to generate a single-strand break at the site of the removed base with both 3'- and 5'-phosphates. In Rickettsia conorii (strain ATCC VR-613 / Malish 7), this protein is Formamidopyrimidine-DNA glycosylase.